We begin with the raw amino-acid sequence, 141 residues long: Hemoglobin subunit alpha-D (141 aa).

Residues 1-141 (VLTGEDKKHV…VAAVLAEKYR (141 aa)) form the Globin domain. Heme b is bound by residues His-58 and His-87.

Belongs to the globin family. As to quaternary structure, heterotetramer of two alpha-D chains and two beta chains. Red blood cells.

Functionally, involved in oxygen transport from the lung to the various peripheral tissues. The sequence is that of Hemoglobin subunit alpha-D (HBAD) from Turdus merula (Common blackbird).